The following is a 279-amino-acid chain: Replication protein A 32 kDa subunit A (279 aa).

The tract at residues 1–39 (MMSFSQPDAFSPSQFTSSQNAAADSTTPSKSRGASSTMP) is disordered. The OB DNA-binding region spans 71–145 (VRLVGLVSGK…RATAFAIRPV (75 aa)). Residues 181-210 (GSSSSNGFSEMTTPTSVKSNPAPVLSVTNG) are disordered. Over residues 190-199 (EMTTPTSVKS) the composition is skewed to polar residues.

Belongs to the replication factor A protein 2 family. As to quaternary structure, heterotrimer of RPA1, RPA2 and RPA3 (canonical replication protein A complex). Interacts with RPA1A, RPA1B and RPA3. Post-translationally, phosphorylated in a cell-cycle-dependent manner (from the S phase until mitosis). In response to DNA damage, recruited to DNA-repair nuclear foci, as a hypophosphorylated form. Expressed in root tips, roots, shoot apical meristem (SAM), young leaves, flag leaves and ears, and at lower levels in mature leaves.

Its subcellular location is the nucleus. In terms of biological role, component of the replication protein A complex (RPA) required for DNA recombination, repair and replication. The activity of RPA is mediated by single-stranded DNA binding and protein interactions. This is Replication protein A 32 kDa subunit A (RPA2A) from Oryza sativa subsp. japonica (Rice).